Reading from the N-terminus, the 91-residue chain is ATP synthase subunit c 1 (91 aa).

The next 2 helical transmembrane spans lie at 4-24 (FTMC…GTAI) and 53-73 (IGLA…LIIL).

The protein belongs to the ATPase C chain family. F-type ATPases have 2 components, F(1) - the catalytic core - and F(0) - the membrane proton channel. F(1) has five subunits: alpha(3), beta(3), gamma(1), delta(1), epsilon(1). F(0) has three main subunits: a(1), b(2) and c(10-14). The alpha and beta chains form an alternating ring which encloses part of the gamma chain. F(1) is attached to F(0) by a central stalk formed by the gamma and epsilon chains, while a peripheral stalk is formed by the delta and b chains.

It localises to the cell inner membrane. In terms of biological role, f(1)F(0) ATP synthase produces ATP from ADP in the presence of a proton or sodium gradient. F-type ATPases consist of two structural domains, F(1) containing the extramembraneous catalytic core and F(0) containing the membrane proton channel, linked together by a central stalk and a peripheral stalk. During catalysis, ATP synthesis in the catalytic domain of F(1) is coupled via a rotary mechanism of the central stalk subunits to proton translocation. Its function is as follows. Key component of the F(0) channel; it plays a direct role in translocation across the membrane. A homomeric c-ring of between 10-14 subunits forms the central stalk rotor element with the F(1) delta and epsilon subunits. The polypeptide is ATP synthase subunit c 1 (Pelobacter propionicus (strain DSM 2379 / NBRC 103807 / OttBd1)).